The following is a 401-amino-acid chain: Argininosuccinate synthase (401 aa).

Residue 8–16 (AYSGGLDTS) participates in ATP binding. Residue tyrosine 85 participates in L-citrulline binding. Residue glycine 115 participates in ATP binding. The L-aspartate site is built by threonine 117, asparagine 121, and aspartate 122. Asparagine 121 lines the L-citrulline pocket. Arginine 125, serine 173, glutamate 258, and tyrosine 270 together coordinate L-citrulline.

Belongs to the argininosuccinate synthase family. Type 1 subfamily. As to quaternary structure, homotetramer.

Its subcellular location is the cytoplasm. The catalysed reaction is L-citrulline + L-aspartate + ATP = 2-(N(omega)-L-arginino)succinate + AMP + diphosphate + H(+). The protein operates within amino-acid biosynthesis; L-arginine biosynthesis; L-arginine from L-ornithine and carbamoyl phosphate: step 2/3. The chain is Argininosuccinate synthase from Staphylococcus aureus (strain MSSA476).